We begin with the raw amino-acid sequence, 209 residues long: Ribosomal RNA large subunit methyltransferase E (209 aa).

S-adenosyl-L-methionine-binding residues include Gly-63, Trp-65, Asp-83, Asp-99, and Asp-124. Lys-164 functions as the Proton acceptor in the catalytic mechanism.

The protein belongs to the class I-like SAM-binding methyltransferase superfamily. RNA methyltransferase RlmE family.

Its subcellular location is the cytoplasm. It carries out the reaction uridine(2552) in 23S rRNA + S-adenosyl-L-methionine = 2'-O-methyluridine(2552) in 23S rRNA + S-adenosyl-L-homocysteine + H(+). Its function is as follows. Specifically methylates the uridine in position 2552 of 23S rRNA at the 2'-O position of the ribose in the fully assembled 50S ribosomal subunit. The polypeptide is Ribosomal RNA large subunit methyltransferase E (Colwellia psychrerythraea (strain 34H / ATCC BAA-681) (Vibrio psychroerythus)).